A 241-amino-acid polypeptide reads, in one-letter code: Methylthioribulose-1-phosphate dehydratase (241 aa).

C102 is a binding site for substrate. Zn(2+) contacts are provided by H120, H122, and H199.

This sequence belongs to the aldolase class II family. MtnB subfamily. Zn(2+) serves as cofactor.

Its subcellular location is the cytoplasm. It carries out the reaction 5-(methylsulfanyl)-D-ribulose 1-phosphate = 5-methylsulfanyl-2,3-dioxopentyl phosphate + H2O. It functions in the pathway amino-acid biosynthesis; L-methionine biosynthesis via salvage pathway; L-methionine from S-methyl-5-thio-alpha-D-ribose 1-phosphate: step 2/6. In terms of biological role, catalyzes the dehydration of methylthioribulose-1-phosphate (MTRu-1-P) into 2,3-diketo-5-methylthiopentyl-1-phosphate (DK-MTP-1-P). This Coprinopsis cinerea (strain Okayama-7 / 130 / ATCC MYA-4618 / FGSC 9003) (Inky cap fungus) protein is Methylthioribulose-1-phosphate dehydratase.